The sequence spans 283 residues: Polyamine aminopropyltransferase (283 aa).

In terms of domain architecture, PABS spans 5–238 (TTWIDEYHKG…GIWSWTFASS (234 aa)). Residue Gln-32 participates in S-methyl-5'-thioadenosine binding. Spermidine is bound by residues His-63 and Asp-87. S-methyl-5'-thioadenosine contacts are provided by residues Glu-107 and 139 to 140 (DG). The Proton acceptor role is filled by Asp-158. 158–161 (DSSD) contacts spermidine.

The protein belongs to the spermidine/spermine synthase family. Homodimer or homotetramer.

The protein localises to the cytoplasm. It carries out the reaction S-adenosyl 3-(methylsulfanyl)propylamine + putrescine = S-methyl-5'-thioadenosine + spermidine + H(+). It participates in amine and polyamine biosynthesis; spermidine biosynthesis; spermidine from putrescine: step 1/1. In terms of biological role, catalyzes the irreversible transfer of a propylamine group from the amino donor S-adenosylmethioninamine (decarboxy-AdoMet) to putrescine (1,4-diaminobutane) to yield spermidine. In Prochlorococcus marinus (strain MIT 9215), this protein is Polyamine aminopropyltransferase.